We begin with the raw amino-acid sequence, 339 residues long: Outer membrane protein assembly factor BamC (339 aa).

An N-terminal signal peptide occupies residues 1-19; the sequence is MKFSRQLVLGSLAVLVLSA. The N-palmitoyl cysteine moiety is linked to residue cysteine 20. The S-diacylglycerol cysteine moiety is linked to residue cysteine 20.

It belongs to the BamC family. In terms of assembly, part of the Bam complex.

Its subcellular location is the cell outer membrane. Its function is as follows. Part of the outer membrane protein assembly complex, which is involved in assembly and insertion of beta-barrel proteins into the outer membrane. The protein is Outer membrane protein assembly factor BamC of Vibrio cholerae serotype O1 (strain ATCC 39315 / El Tor Inaba N16961).